The chain runs to 392 residues: uncharacterized protein (392 aa).

The signal sequence occupies residues 1–19 (MRRIVCPPVLFLSASLLTG). A lipid anchor (N-palmitoyl cysteine) is attached at cysteine 20. Residue cysteine 20 is the site of S-diacylglycerol cysteine attachment. Residues 148–173 (SSGSSGGGGGGSGSSSDGGIKNGSDE) form a disordered region. Gly residues predominate over residues 151–160 (SSGGGGGGSG).

This sequence belongs to the TP013X lipoprotein family.

Its subcellular location is the cell membrane. This is an uncharacterized protein from Treponema pallidum (strain Nichols).